Here is a 397-residue protein sequence, read N- to C-terminus: Phosphoglycerate kinase (397 aa).

Substrate-binding positions include 21 to 23 (DFN), Arg-36, 59 to 62 (HCGR), Arg-118, and Arg-151. ATP-binding positions include Lys-201, Glu-323, and 353–356 (GGDT).

The protein belongs to the phosphoglycerate kinase family. Monomer.

It localises to the cytoplasm. It carries out the reaction (2R)-3-phosphoglycerate + ATP = (2R)-3-phospho-glyceroyl phosphate + ADP. It functions in the pathway carbohydrate degradation; glycolysis; pyruvate from D-glyceraldehyde 3-phosphate: step 2/5. This Bartonella quintana (strain Toulouse) (Rochalimaea quintana) protein is Phosphoglycerate kinase.